The primary structure comprises 44 residues: Photosystem I reaction center subunit IX (44 aa).

Residues 7–27 traverse the membrane as a helical segment; sequence YLSVAPVVSTIWFGALAGLLI.

Belongs to the PsaJ family.

It localises to the plastid. Its subcellular location is the chloroplast thylakoid membrane. Functionally, may help in the organization of the PsaE and PsaF subunits. This Cucumis sativus (Cucumber) protein is Photosystem I reaction center subunit IX.